A 329-amino-acid polypeptide reads, in one-letter code: METFGVFHKEDDEQMDLPPGFRFHPTDEELITHYLHKKVLDLGFSAKAIGEVDLNKAEPWELPYKAKIGEKEWYFFCVRDRKYPTGLRTNRATQAGYWKATGKDKEIFRGKSLVGMKKTLVFYRGRAPKGQKTNWVMHEYRLDGKLSAHNLPKTAKNEWVICRVFHKTAGGKKIPISTLIRIGSYGTGSSLPPLTDSSPYNDKTKTEPVYVPCFSNQAETRGTILNCFSNPSLSSIQPDFLQMIPLYQPQSLNISESSNPVLTQEQSVLQAMMENNRRQNFKTLSISQETGVSNTDNSSVFEFGRKRFDHQEVPSPSSGPVDLEPFWNY.

The region spanning leucine 17–lysine 167 is the NAC domain. A DNA-binding region spans residues valine 114–lysine 173.

In terms of tissue distribution, expressed at low levels in leaves.

The protein localises to the nucleus. In Arabidopsis thaliana (Mouse-ear cress), this protein is NAC domain-containing protein 79.